A 284-amino-acid polypeptide reads, in one-letter code: Polyamine aminopropyltransferase (284 aa).

The 236-residue stretch at 2–237 (ELWYTEQHTE…GHWLFGFASK (236 aa)) folds into the PABS domain. Gln31 serves as a coordination point for S-methyl-5'-thioadenosine. Residues His62 and Asp86 each contribute to the spermidine site. S-methyl-5'-thioadenosine-binding positions include Glu106 and 137–138 (DG). Asp155 acts as the Proton acceptor in catalysis. 155–158 (DSTD) contributes to the spermidine binding site. Pro162 serves as a coordination point for S-methyl-5'-thioadenosine.

It belongs to the spermidine/spermine synthase family. In terms of assembly, homodimer or homotetramer.

It localises to the cytoplasm. It carries out the reaction S-adenosyl 3-(methylsulfanyl)propylamine + putrescine = S-methyl-5'-thioadenosine + spermidine + H(+). It functions in the pathway amine and polyamine biosynthesis; spermidine biosynthesis; spermidine from putrescine: step 1/1. Its function is as follows. Catalyzes the irreversible transfer of a propylamine group from the amino donor S-adenosylmethioninamine (decarboxy-AdoMet) to putrescine (1,4-diaminobutane) to yield spermidine. This is Polyamine aminopropyltransferase from Alkaliphilus oremlandii (strain OhILAs) (Clostridium oremlandii (strain OhILAs)).